Here is a 249-residue protein sequence, read N- to C-terminus: Acetate transporter protein patA (249 aa).

The next 6 membrane-spanning stretches (helical) occupy residues 42–62, 71–91, 106–126, 141–161, 169–189, and 202–222; these read IGSP…TLSM, AITN…LVLV, VFGG…PAFG, AIGY…VAAM, GMLG…FSFA, and AAGA…GHLM.

The protein belongs to the acetate uptake transporter (AceTr) (TC 2.A.96) family.

The protein resides in the endoplasmic reticulum membrane. Its pathway is mycotoxin biosynthesis; patulin biosynthesis. In terms of biological role, acetate transporter protein; part of the gene cluster that mediates the biosynthesis of patulin, an acetate-derived tetraketide mycotoxin produced by several fungal species that shows antimicrobial properties against several bacteria. May be involved in the uptake of acetate, a substrate for the synthesis of 6-methylsalicylic acid by the polyketide synthase patK. The polypeptide is Acetate transporter protein patA (Penicillium expansum (Blue mold rot fungus)).